A 20-amino-acid polypeptide reads, in one-letter code: Large ribosomal subunit protein bL33 (20 aa).

It belongs to the bacterial ribosomal protein bL33 family.

The polypeptide is Large ribosomal subunit protein bL33 (rpmG) (Brevundimonas vesicularis (Pseudomonas vesicularis)).